The sequence spans 344 residues: Heat-inducible transcription repressor HrcA (344 aa).

Belongs to the HrcA family.

Negative regulator of class I heat shock genes (grpE-dnaK-dnaJ and groELS operons). Prevents heat-shock induction of these operons. In Geobacillus sp. (strain WCH70), this protein is Heat-inducible transcription repressor HrcA.